The primary structure comprises 754 residues: Nitrate reductase (754 aa).

The tat-type signal signal peptide spans 1 to 31; sequence MKFTRRSFVKASALATAMVAAGCSPQPVAPK. Residues 39–95 form the 4Fe-4S Mo/W bis-MGD-type domain; that stretch reads ATWYKTVCRYCGVGCGVMVAAKDNRVVAVKGDTENPVNKGLLCVKGYYLDRIMNTEE. Residues cysteine 46, cysteine 49, cysteine 53, and cysteine 81 each contribute to the [4Fe-4S] cluster site. Residues lysine 83, glutamine 144, asparagine 169, cysteine 173, 256–258, methionine 341, glutamine 345, asparagine 451, lysine 497, aspartate 524, 642–651, asparagine 728, and lysine 745 each bind Mo-bis(molybdopterin guanine dinucleotide); these read GTD and TGRILEHWHT.

The protein belongs to the prokaryotic molybdopterin-containing oxidoreductase family. NasA/NapA/NarB subfamily. In terms of assembly, component of the nitrate reductase NapAB complex composed of NapA and NapB. Requires [4Fe-4S] cluster as cofactor. It depends on Mo-bis(molybdopterin guanine dinucleotide) as a cofactor. Post-translationally, predicted to be exported by the Tat system. The position of the signal peptide cleavage has not been experimentally proven.

It is found in the secreted. The catalysed reaction is 2 Fe(II)-[cytochrome] + nitrate + 2 H(+) = 2 Fe(III)-[cytochrome] + nitrite + H2O. Functionally, catalytic subunit of the nitrate reductase complex NapAB. Receives electrons from NapB and catalyzes the reduction of nitrate to nitrite. This chain is Nitrate reductase, found in Symbiobacterium thermophilum (strain DSM 24528 / JCM 14929 / IAM 14863 / T).